Consider the following 475-residue polypeptide: ATP synthase subunit beta (475 aa).

Residue 148 to 155 (GGAGVGKT) participates in ATP binding.

Belongs to the ATPase alpha/beta chains family. In terms of assembly, F-type ATPases have 2 components, CF(1) - the catalytic core - and CF(0) - the membrane proton channel. CF(1) has five subunits: alpha(3), beta(3), gamma(1), delta(1), epsilon(1). CF(0) has three main subunits: a(1), b(2) and c(9-12). The alpha and beta chains form an alternating ring which encloses part of the gamma chain. CF(1) is attached to CF(0) by a central stalk formed by the gamma and epsilon chains, while a peripheral stalk is formed by the delta and b chains.

It is found in the cell inner membrane. It carries out the reaction ATP + H2O + 4 H(+)(in) = ADP + phosphate + 5 H(+)(out). Its function is as follows. Produces ATP from ADP in the presence of a proton gradient across the membrane. The catalytic sites are hosted primarily by the beta subunits. The sequence is that of ATP synthase subunit beta from Psychrobacter sp. (strain PRwf-1).